Reading from the N-terminus, the 961-residue chain is E4 ubiquitin-protein ligase UFD2 (961 aa).

In terms of domain architecture, U-box spans 880–954 (DVPDEFLDPL…LCFKKQKKEE (75 aa)).

The protein belongs to the ubiquitin conjugation factor E4 family. In terms of assembly, interacts with CDC48. Interacts with the ubiquitin-like domain of RAD23 and DSK2. Interacts with PEX29.

It is found in the cytoplasm. Its subcellular location is the nucleus. The enzyme catalyses S-ubiquitinyl-[E2 ubiquitin-conjugating enzyme]-L-cysteine + [acceptor protein]-L-lysine = [E2 ubiquitin-conjugating enzyme]-L-cysteine + N(6)-ubiquitinyl-[acceptor protein]-L-lysine.. Its pathway is protein modification; protein ubiquitination. Its function is as follows. E4 ubiquitin chain-elongation enzyme specifically involved in polyubiquitin chain assembly. Binds to CDC48 and elongates mono- and diubiquitinated ERAD substrates presented by the UFD1-NPL4-CDC48/p97 (UNC) AAA ATPase complex to a chain length of 4 to 6 ubiquitin moieties. Delivers these polyubiquitinated substrates to RAD23 and DSK2, which target them to the proteasome. Has E3 ubiquitin-protein ligase activity, accepting ubiquitin from its cognate E2 ubiquitin-conjugating enzyme UBC4. Enhances ubiquitination at 'Lys-48', but not at 'Lys-29' of the Ub moiety. Promotes ubiquitin chain elongation at 'Lys-48' on the DOA10 substrate PEX29. Also involved in the proteolytic processing of the ER-bound transcription factor SPT23. This chain is E4 ubiquitin-protein ligase UFD2 (UFD2), found in Saccharomyces cerevisiae (strain ATCC 204508 / S288c) (Baker's yeast).